Here is a 126-residue protein sequence, read N- to C-terminus: Acidic phospholipase A2 4 (126 aa).

Residue Ser-1 is a signal peptide. Residues 2–7 (NRPMPL) constitute a propeptide that is removed on maturation. Disulfide bonds link Cys-18–Cys-78, Cys-33–Cys-125, Cys-35–Cys-51, Cys-50–Cys-106, Cys-57–Cys-99, Cys-67–Cys-92, and Cys-85–Cys-97. The Ca(2+) site is built by Tyr-34, Gly-36, and Gly-38. The active site involves His-54. Residue Asp-55 coordinates Ca(2+). The active site involves Asp-100.

The protein belongs to the phospholipase A2 family. Group I subfamily. D49 sub-subfamily. As to quaternary structure, monomer. It depends on Ca(2+) as a cofactor. Expressed by the venom gland.

Its subcellular location is the secreted. The enzyme catalyses a 1,2-diacyl-sn-glycero-3-phosphocholine + H2O = a 1-acyl-sn-glycero-3-phosphocholine + a fatty acid + H(+). Snake venom phospholipase A2 (PLA2) that exhibits strong anticoagulant activity, which is not due to the catalytic activity. PLA2 catalyzes the calcium-dependent hydrolysis of the 2-acyl groups in 3-sn-phosphoglycerides. This is Acidic phospholipase A2 4 from Naja sagittifera (Andaman cobra).